The sequence spans 102 residues: Large ribosomal subunit protein bL21 (102 aa).

The protein belongs to the bacterial ribosomal protein bL21 family. Part of the 50S ribosomal subunit. Contacts protein L20.

In terms of biological role, this protein binds to 23S rRNA in the presence of protein L20. The protein is Large ribosomal subunit protein bL21 of Lachnoclostridium phytofermentans (strain ATCC 700394 / DSM 18823 / ISDg) (Clostridium phytofermentans).